The primary structure comprises 147 residues: Large ribosomal subunit protein uL15 (147 aa).

The disordered stretch occupies residues 1 to 42 (MTIKVHHLRPAPGAKTAKTRVGRGEGSKGKTAGRGTKGSKAR).

It belongs to the universal ribosomal protein uL15 family. In terms of assembly, part of the 50S ribosomal subunit.

In terms of biological role, binds to the 23S rRNA. This Salinispora arenicola (strain CNS-205) protein is Large ribosomal subunit protein uL15.